The sequence spans 419 residues: MNIFDELKERGLVFQTTDEDALRKALEEGSVSYYTGYDPTADSLHLGHLVAILTSRRLQLAGHKPYALVGGATGLIGDPSFKDVERSLQTKKTVVSWGNKIRGQLSNFLEFETGDNKAVLVNNYDWFSNISFIDFLRDVGKYFTVNYMMSKESVKKRIETGISYTEFAYQIMQGYDFYELNKNYNVTLQIGGSDQWGNMTAGTELIRRKSNGVSHVMTVPLITDSTGKKFGKSEGNAVWLDADKTSPYEMYQFWLNVMDADAVRFLKIFTFLSLKEIEDIRIQFEEAPHQRLAQKTLAREVVTLVHGEKAYKEAVNITEQLFAGNIKGLSVKELKQGLRGVPNYHVQTEDNLNIIDLLVTSGVVNSKRQAREDVSNGAIYINGDRIQDLEYTISENDKLENEITVIRRGKKKYFVLNFK.

Tyr34 is a binding site for L-tyrosine. Residues 39 to 48 carry the 'HIGH' region motif; that stretch reads PTADSLHLGH. 2 residues coordinate L-tyrosine: Tyr169 and Gln173. Residues 229–233 carry the 'KMSKS' region motif; sequence KFGKS. Residue Lys232 coordinates ATP. The S4 RNA-binding domain occupies 352 to 419; it reads LNIIDLLVTS…KKKYFVLNFK (68 aa).

Belongs to the class-I aminoacyl-tRNA synthetase family. TyrS type 1 subfamily. In terms of assembly, homodimer.

It is found in the cytoplasm. It catalyses the reaction tRNA(Tyr) + L-tyrosine + ATP = L-tyrosyl-tRNA(Tyr) + AMP + diphosphate + H(+). Functionally, catalyzes the attachment of tyrosine to tRNA(Tyr) in a two-step reaction: tyrosine is first activated by ATP to form Tyr-AMP and then transferred to the acceptor end of tRNA(Tyr). The polypeptide is Tyrosine--tRNA ligase (Streptococcus agalactiae serotype V (strain ATCC BAA-611 / 2603 V/R)).